Reading from the N-terminus, the 126-residue chain is Aspartate 1-decarboxylase (126 aa).

S25 functions as the Schiff-base intermediate with substrate; via pyruvic acid in the catalytic mechanism. S25 carries the post-translational modification Pyruvic acid (Ser). T57 is a substrate binding site. The active-site Proton donor is the Y58. 73 to 75 lines the substrate pocket; sequence GAA.

Belongs to the PanD family. Heterooctamer of four alpha and four beta subunits. The cofactor is pyruvate. Is synthesized initially as an inactive proenzyme, which is activated by self-cleavage at a specific serine bond to produce a beta-subunit with a hydroxyl group at its C-terminus and an alpha-subunit with a pyruvoyl group at its N-terminus.

The protein localises to the cytoplasm. It catalyses the reaction L-aspartate + H(+) = beta-alanine + CO2. The protein operates within cofactor biosynthesis; (R)-pantothenate biosynthesis; beta-alanine from L-aspartate: step 1/1. Functionally, catalyzes the pyruvoyl-dependent decarboxylation of aspartate to produce beta-alanine. The sequence is that of Aspartate 1-decarboxylase from Azotobacter vinelandii (strain DJ / ATCC BAA-1303).